A 175-amino-acid chain; its full sequence is MLSVMVSSSLVLIVFFLGASEEAKPATTTIKNTKPQCRPEDYATRLQDLRVTFHRVKPTLQREDDYSVWLDGTVVKGCWGCSVMDWLLRRYLEIVFPAGDHVYPGLKTELHSMRSTLESIYKDMRQCPLLGCGDKSVISRLSQEAERKSDNGTRKGLSELDTLFSRLEEYLHSRK.

An N-terminal signal peptide occupies residues 1–19 (MLSVMVSSSLVLIVFFLGA). 2 disulfide bridges follow: cysteine 37/cysteine 127 and cysteine 81/cysteine 132. N-linked (GlcNAc...) asparagine; by host glycosylation is present at asparagine 151.

The protein belongs to the IL-10 family. In terms of assembly, homodimer; disulfide-linked.

Its subcellular location is the secreted. In terms of biological role, functional viral IL-10 homolog. Can bind to the human IL-10 receptor and compete with human IL-10 for binding sites. Requires both subunits of the human IL-10 receptor complex to induce signal transduction events and biological activities. IL-10 signaling pathway has several immunosuppressive activities that are exploited by the virus. Inhibits TLR-induced type I interferon production in host plasmacytoid dendritic cells. In Human cytomegalovirus (strain AD169) (HHV-5), this protein is Viral interleukin-10 homolog (UL111A).